Reading from the N-terminus, the 151-residue chain is Regulatory protein RecX (151 aa).

Belongs to the RecX family.

It localises to the cytoplasm. Functionally, modulates RecA activity. The sequence is that of Regulatory protein RecX from Prosthecochloris aestuarii (strain DSM 271 / SK 413).